A 472-amino-acid chain; its full sequence is Putative cytochrome P450 135B1 (472 aa).

A heme-binding site is contributed by Cys-388. Residues 442–472 (RDVSATSQATAQGAGCPAARGGGPSRAVGSQ) form a disordered region. Residues 452-472 (AQGAGCPAARGGGPSRAVGSQ) show a composition bias toward low complexity.

This sequence belongs to the cytochrome P450 family. The cofactor is heme.

The polypeptide is Putative cytochrome P450 135B1 (cyp135B1) (Mycobacterium bovis (strain ATCC BAA-935 / AF2122/97)).